We begin with the raw amino-acid sequence, 247 residues long: uncharacterized protein (247 aa).

The protein belongs to the AIM2 family.

It localises to the cytoplasm. The protein resides in the nucleus. This is an uncharacterized protein from Schizosaccharomyces pombe (strain 972 / ATCC 24843) (Fission yeast).